A 439-amino-acid polypeptide reads, in one-letter code: Fibroleukin (439 aa).

Positions 1 to 23 (MKLANWYWLSSAVLATYGFLVVA) are cleaved as a signal peptide. The N-linked (GlcNAc...) asparagine glycan is linked to N25. Residues 73–165 (SRIEEVFKEV…GRLEKLNLVN (93 aa)) are a coiled coil. The interval 103 to 126 (ADDNGDPGRNGLLLPSTGAPGEVG) is disordered. N-linked (GlcNAc...) asparagine glycans are attached at residues N179, N235, N263, and N336. The 233-residue stretch at 204-436 (PVQHLIYKDC…EAKMMIRPKH (233 aa)) folds into the Fibrinogen C-terminal domain. C213 and C242 are joined by a disulfide. C371 and C384 are disulfide-bonded.

Homotetramer; disulfide-linked. As to expression, constitutively expressed in cytotoxic T-cells.

It localises to the secreted. May play a role in physiologic lymphocyte functions at mucosal sites. The polypeptide is Fibroleukin (FGL2) (Homo sapiens (Human)).